The sequence spans 888 residues: Extra-large guanine nucleotide-binding protein 1 (888 aa).

The segment at 98–119 is disordered; that stretch reads SVIEHTEEEEEEEGGDGEDCEL. Positions 103–118 are enriched in acidic residues; it reads TEEEEEEEGGDGEDCE. The Nuclear localization signal motif lies at 205-222; sequence RRVRVVPVKKQPQTKGKK. An RING-type; degenerate zinc finger spans residues 225–268; sequence CYRCFKGSRFTEKEVCLVCDAKYCNSCVLRAMGSMPEGRKCVTC. Residues 482-879 enclose the G-alpha domain; sequence TLQKILLVGN…NICMSEYSMY (398 aa). The tract at residues 485-498 is G1 motif; the sequence is KILLVGNSGSGTST. GTP contacts are provided by residues 490 to 498 and 661 to 669; these read GNSGSGTST and DILYAEGVT. 2 residues coordinate Ca(2+): S497 and T669. Residues 661–669 form a G2 motif region; it reads DILYAEGVT. Positions 702-711 are G3 motif; it reads YQLIRVPSRG. The G4 motif stretch occupies residues 770–777; it reads LLILNKYD. Position 774 to 777 (774 to 777) interacts with GTP; the sequence is NKYD. Positions 843–848 are G5 motif; sequence SKSLDP.

This sequence belongs to the G-alpha family. XLG subfamily. Requires Ca(2+) as cofactor. As to expression, ubiquitous. Strongly expressed in vascular tissues, root and shoot meristems and lateral root primordia.

Its subcellular location is the nucleus. Guanine nucleotide-binding proteins (G proteins) are involved as modulators or transducers in various transmembrane signaling systems. Binds GTP with specificity. Plays a role in the root morphogenesis by regulation of the cell proliferation. In Arabidopsis thaliana (Mouse-ear cress), this protein is Extra-large guanine nucleotide-binding protein 1 (XLG1).